The primary structure comprises 118 residues: Ribulose bisphosphate carboxylase small subunit (118 aa).

Belongs to the RuBisCO small chain family. Heterohexadecamer of 8 large and 8 small subunits.

Its subcellular location is the carboxysome. Its function is as follows. RuBisCO catalyzes two reactions: the carboxylation of D-ribulose 1,5-bisphosphate, the primary event in carbon dioxide fixation, as well as the oxidative fragmentation of the pentose substrate in the photorespiration process. Both reactions occur simultaneously and in competition at the same active site. Although the small subunit is not catalytic it is essential for maximal activity. The protein is Ribulose bisphosphate carboxylase small subunit of Thermosynechococcus vestitus (strain NIES-2133 / IAM M-273 / BP-1).